Here is a 365-residue protein sequence, read N- to C-terminus: Short-chain dehydrogenase iccH (365 aa).

The NADP(+) site is built by Leu16, Arg52, and Asp70. N-linked (GlcNAc...) asparagine glycosylation occurs at Asn90. NADP(+) contacts are provided by Asn102, Tyr221, Lys225, and Ser260. Tyr221 functions as the Proton donor in the catalytic mechanism. Lys225 (lowers pKa of active site Tyr) is an active-site residue. A helical membrane pass occupies residues 267 to 287 (IWVMFLLMKFVLPLLAPLAVW). N-linked (GlcNAc...) asparagine glycans are attached at residues Asn291 and Asn324.

The protein belongs to the short-chain dehydrogenases/reductases (SDR) family.

It is found in the membrane. It functions in the pathway mycotoxin biosynthesis. Its function is as follows. NADH-dependent flavin oxidoreductase; part of the gene cluster that mediates the biosynthesis of ilicicolin H, a 4-hydroxy-2-pyridonealkaloid that has potent and broad antifungal activities by inhibiting the mitochondrial respiration chain. IccA to iccE are sufficient for ilicicolin H biosynthesis and the roles of the remaining enzymes, iccF, iccG and iccH within the pathway have still to be determined. The biosynthesis of ilicicolin H starts with formation of the tetramic acid by the hybrid PKS-NRPS synthetase iccA with the partnering trans-enoyl reductase iccB since iccA lacks a designated enoylreductase (ER) domain. The cytochrome P450 monooxygenase iccC then catalyzes the ring expansion of the tetramate to the acyclic 2-pyridone. The pericyclase iccD further converts the acyclic 2-pyridone into 8-epi-ilicicolin H. Finally, the epimerase iccE converts 8-epi-ilicicolin H into ilicicolin H via epimerizationd. The sequence is that of Short-chain dehydrogenase iccH from Talaromyces variabilis (Penicillium variabile).